We begin with the raw amino-acid sequence, 491 residues long: tRNA-2-methylthio-N(6)-dimethylallyladenosine synthase (491 aa).

Positions 3–119 (RSYQIRTYGC…LPTLLERARH (117 aa)) constitute an MTTase N-terminal domain. 6 residues coordinate [4Fe-4S] cluster: cysteine 12, cysteine 48, cysteine 82, cysteine 156, cysteine 160, and cysteine 163. Positions 142 to 372 (RESAYSGWVS…IELQNQISWD (231 aa)) constitute a Radical SAM core domain. Residues 375 to 446 (KELVGRSVEL…PHHLVADSEI (72 aa)) enclose the TRAM domain.

The protein belongs to the methylthiotransferase family. MiaB subfamily. In terms of assembly, monomer. [4Fe-4S] cluster is required as a cofactor.

It localises to the cytoplasm. The catalysed reaction is N(6)-dimethylallyladenosine(37) in tRNA + (sulfur carrier)-SH + AH2 + 2 S-adenosyl-L-methionine = 2-methylsulfanyl-N(6)-dimethylallyladenosine(37) in tRNA + (sulfur carrier)-H + 5'-deoxyadenosine + L-methionine + A + S-adenosyl-L-homocysteine + 2 H(+). In terms of biological role, catalyzes the methylthiolation of N6-(dimethylallyl)adenosine (i(6)A), leading to the formation of 2-methylthio-N6-(dimethylallyl)adenosine (ms(2)i(6)A) at position 37 in tRNAs that read codons beginning with uridine. This is tRNA-2-methylthio-N(6)-dimethylallyladenosine synthase from Saccharopolyspora erythraea (strain ATCC 11635 / DSM 40517 / JCM 4748 / NBRC 13426 / NCIMB 8594 / NRRL 2338).